The following is a 151-amino-acid chain: 3-dehydroquinate dehydratase (151 aa).

Tyr-26 acts as the Proton acceptor in catalysis. Substrate is bound by residues Asn-75, His-81, and Asp-88. The active-site Proton donor is the His-101. Substrate contacts are provided by residues 102–103 (LS) and Arg-112.

The protein belongs to the type-II 3-dehydroquinase family. In terms of assembly, homododecamer.

It carries out the reaction 3-dehydroquinate = 3-dehydroshikimate + H2O. Its pathway is metabolic intermediate biosynthesis; chorismate biosynthesis; chorismate from D-erythrose 4-phosphate and phosphoenolpyruvate: step 3/7. Its function is as follows. Catalyzes a trans-dehydration via an enolate intermediate. This chain is 3-dehydroquinate dehydratase, found in Shewanella halifaxensis (strain HAW-EB4).